The chain runs to 305 residues: uncharacterized protein (305 aa).

The protein belongs to the ADP-ribosylglycohydrolase family.

This is an uncharacterized protein from Archaeoglobus fulgidus (strain ATCC 49558 / DSM 4304 / JCM 9628 / NBRC 100126 / VC-16).